Here is a 2183-residue protein sequence, read N- to C-terminus: Genome polyprotein (2183 aa).

G2 carries the N-myristoyl glycine; by host lipid modification. The Cytoplasmic portion of the chain corresponds to 2–1493 (GAQVSTQKTG…HVSRAFICLQ (1492 aa)). The segment at 566–582 (FYQGPTEESVERAMGRV) is amphipathic alpha-helix. Active-site for protease 2A activity residues include H870 and D888. Zn(2+) is bound by residues C905 and C907. C959 serves as the catalytic For protease 2A activity. Zn(2+) contacts are provided by C965 and H967. The membrane-binding stretch occupies residues 1099–1171 (NNNWLKKFTE…EQSAPSQSDQ (73 aa)). The tract at residues 1099–1237 (NNNWLKKFTE…SPGAGKSVAT (139 aa)) is oligomerization. The interval 1120–1124 (AVKIQ) is RNA-binding. The SF3 helicase domain occupies 1203–1359 (EKKMSNYIQF…SMYSQNGKIN (157 aa)). Zn(2+)-binding residues include C1367, C1379, and C1384. Residues 1367 to 1384 (CDEECCPVNFKKCCPLVC) form a C4-type; degenerate zinc finger. An RNA-binding region spans residues 1411–1418 (EYNHRHSV). The interval 1422–1427 (LEALFQ) is oligomerization. The stretch at 1494–1509 (ALTTFVSVAGIIYIIY) is an intramembrane region. Topologically, residues 1510 to 2183 (KLFAGFQGAY…TLRRKWLDAF (674 aa)) are cytoplasmic. Residue Y1519 is modified to O-(5'-phospho-RNA)-tyrosine. The Peptidase C3 domain occupies 1539-1717 (GPAFEFAVAM…FSASLLRHYF (179 aa)). Residues H1578, E1609, and C1685 each act as for protease 3C activity in the active site. A RdRp catalytic domain is found at 1948 to 2064 (GHLRAFDYSG…SYPLPIDASL (117 aa)). Mg(2+) is bound by residues D1954 and D2050.

It belongs to the picornaviruses polyprotein family. In terms of assembly, interacts with capsid protein VP1 and capsid protein VP3 to form heterotrimeric protomers. As to quaternary structure, interacts with capsid protein VP0, and capsid protein VP3 to form heterotrimeric protomers. Five protomers subsequently associate to form pentamers which serve as building blocks for the capsid. Interacts with capsid protein VP2, capsid protein VP3 and capsid protein VP4 following cleavage of capsid protein VP0. Interacts with host CXADR. Interacts with capsid protein VP1 and capsid protein VP3 in the mature capsid. In terms of assembly, interacts with capsid protein VP0 and capsid protein VP1 to form heterotrimeric protomers. Five protomers subsequently associate to form pentamers which serve as building blocks for the capsid. Interacts with capsid protein VP4 in the mature capsid. Interacts with protein 2C; this interaction may be important for virion morphogenesis. As to quaternary structure, interacts with capsid protein VP1 and capsid protein VP3. Homodimer. In terms of assembly, homohexamer; forms a hexameric ring structure with 6-fold symmetry characteristic of AAA+ ATPases. Interacts (via N-terminus) with host RTN3 (via reticulon domain); this interaction is important for viral replication. Interacts with capsid protein VP3; this interaction may be important for virion morphogenesis. As to quaternary structure, interacts with protein 3CD. Homodimer. Interacts with host GBF1. Interacts (via GOLD domain) with host ACBD3 (via GOLD domain); this interaction allows the formation of a viral protein 3A/ACBD3 heterotetramer with a 2:2 stoichiometry, which will stimulate the recruitment of host PI4KB in order to synthesize PI4P at the viral RNA replication sites. In terms of assembly, interacts with RNA-directed RNA polymerase. As to quaternary structure, interacts with protein 3AB and with RNA-directed RNA polymerase. Interacts with Viral protein genome-linked and with protein 3CD. It depends on Mg(2+) as a cofactor. In terms of processing, specific enzymatic cleavages in vivo by the viral proteases yield processing intermediates and the mature proteins. Myristoylation is required for the formation of pentamers during virus assembly. Further assembly of 12 pentamers and a molecule of genomic RNA generates the provirion. Post-translationally, during virion maturation, immature virions are rendered infectious following cleavage of VP0 into VP4 and VP2. This maturation seems to be an autocatalytic event triggered by the presence of RNA in the capsid and it is followed by a conformational change infectious virion. In terms of processing, myristoylation is required during RNA encapsidation and formation of the mature virus particle. VPg is uridylylated by the polymerase into VPg-pUpU. This acts as a nucleotide-peptide primer for the genomic RNA replication.

The protein resides in the virion. It localises to the host cytoplasm. It is found in the host cytoplasmic vesicle membrane. Its subcellular location is the host nucleus. The catalysed reaction is a ribonucleoside 5'-triphosphate + H2O = a ribonucleoside 5'-diphosphate + phosphate + H(+). The enzyme catalyses Selective cleavage of Tyr-|-Gly bond in the picornavirus polyprotein.. It carries out the reaction RNA(n) + a ribonucleoside 5'-triphosphate = RNA(n+1) + diphosphate. It catalyses the reaction Selective cleavage of Gln-|-Gly bond in the poliovirus polyprotein. In other picornavirus reactions Glu may be substituted for Gln, and Ser or Thr for Gly.. Its activity is regulated as follows. Replication or transcription is subject to high level of random mutations by the nucleotide analog ribavirin. Its function is as follows. Forms an icosahedral capsid of pseudo T=3 symmetry with capsid proteins VP2 and VP3. The capsid is 300 Angstroms in diameter, composed of 60 copies of each capsid protein and enclosing the viral positive strand RNA genome. Capsid protein VP1 mainly forms the vertices of the capsid. Capsid protein VP1 interacts with host CXADR to provide virion attachment to target host cells. This attachment induces virion internalization. Tyrosine kinases are probably involved in the entry process. After binding to its receptor, the capsid undergoes conformational changes. Capsid protein VP1 N-terminus (that contains an amphipathic alpha-helix) and capsid protein VP4 are externalized. Together, they shape a pore in the host membrane through which viral genome is translocated to host cell cytoplasm. In terms of biological role, forms an icosahedral capsid of pseudo T=3 symmetry with capsid proteins VP2 and VP3. The capsid is 300 Angstroms in diameter, composed of 60 copies of each capsid protein and enclosing the viral positive strand RNA genome. Lies on the inner surface of the capsid shell. After binding to the host receptor, the capsid undergoes conformational changes. Capsid protein VP4 is released, Capsid protein VP1 N-terminus is externalized, and together, they shape a pore in the host membrane through which the viral genome is translocated into the host cell cytoplasm. Functionally, component of immature procapsids, which is cleaved into capsid proteins VP4 and VP2 after maturation. Allows the capsid to remain inactive before the maturation step. Its function is as follows. Cysteine protease that cleaves viral polyprotein and specific host proteins. It is responsible for the autocatalytic cleavage between the P1 and P2 regions, which is the first cleavage occurring in the polyprotein. Also cleaves the host translation initiation factor EIF4G1, in order to shut down the capped cellular mRNA translation. Inhibits the host nucleus-cytoplasm protein and RNA trafficking by cleaving host members of the nuclear pores. Counteracts stress granule formation probably by antagonizing its assembly or promoting its dissassembly. Cleaves and inhibits host IFIH1/MDA5, thereby inhibiting the type-I IFN production and the establishment of the antiviral state. Cleaves and inhibits host MAVS, thereby inhibiting the type-I IFN production and the establishment of the antiviral state. In terms of biological role, plays an essential role in the virus replication cycle by acting as a viroporin. Creates a pore in the host endoplasmic reticulum and as a consequence releases Ca2+ in the cytoplasm of infected cell. In turn, high levels of cytoplasmic calcium may trigger membrane trafficking and transport of viral ER-associated proteins to viroplasms, sites of viral genome replication. Induces and associates with structural rearrangements of intracellular membranes. Displays RNA-binding, nucleotide binding and NTPase activities. May play a role in virion morphogenesis and viral RNA encapsidation by interacting with the capsid protein VP3. Functionally, localizes the viral replication complex to the surface of membranous vesicles. Together with protein 3CD binds the Cis-Active RNA Element (CRE) which is involved in RNA synthesis initiation. Acts as a cofactor to stimulate the activity of 3D polymerase, maybe through a nucleid acid chaperone activity. Its function is as follows. Localizes the viral replication complex to the surface of membranous vesicles. It inhibits host cell endoplasmic reticulum-to-Golgi apparatus transport and causes the disassembly of the Golgi complex, possibly through GBF1 interaction. This would result in depletion of MHC, trail receptors and IFN receptors at the host cell surface. Plays an essential role in viral RNA replication by recruiting ACBD3 and PI4KB at the viral replication sites, thereby allowing the formation of the rearranged membranous structures where viral replication takes place. In terms of biological role, acts as a primer for viral RNA replication and remains covalently bound to viral genomic RNA. VPg is uridylylated prior to priming replication into VPg-pUpU. The oriI viral genomic sequence may act as a template for this. The VPg-pUpU is then used as primer on the genomic RNA poly(A) by the RNA-dependent RNA polymerase to replicate the viral genome. During genome replication, the VPg-RNA linkage is removed by the host TDP2, thereby accelerating replication. During the late stage of the replication cycle, host TDP2 is excluded from sites of viral RNA synthesis and encapsidation, allowing for the generation of progeny virions. Involved in the viral replication complex and viral polypeptide maturation. It exhibits protease activity with a specificity and catalytic efficiency that is different from protease 3C. Protein 3CD lacks polymerase activity. Protein 3CD binds to the 5'UTR of the viral genome. Functionally, replicates the viral genomic RNA on the surface of intracellular membranes. May form linear arrays of subunits that propagate along a strong head-to-tail interaction called interface-I. Covalently attaches UMP to a tyrosine of VPg, which is used to prime RNA synthesis. The positive stranded RNA genome is first replicated at virus induced membranous vesicles, creating a dsRNA genomic replication form. This dsRNA is then used as template to synthesize positive stranded RNA genomes. ss(+)RNA genomes are either translated, replicated or encapsidated. Its function is as follows. Major viral protease that mediates proteolytic processing of the polyprotein. Cleaves host EIF5B, contributing to host translation shutoff. Also cleaves host PABPC1, contributing to host translation shutoff. Cleaves host NLRP1, triggers host N-glycine-mediated degradation of the autoinhibitory NLRP1 N-terminal fragment. The protein is Genome polyprotein of Coxsackievirus B4 (strain E2).